The sequence spans 65 residues: Sec-independent protein translocase protein TatA (65 aa).

The chain crosses the membrane as a helical span at residues 9–29 (ILIIVLLVVVVFGIGKLPQVG). Positions 43–65 (SSGEEEKEEVETKEETKTIEKSE) are disordered. Residues 45–54 (GEEEKEEVET) show a composition bias toward acidic residues. A compositionally biased stretch (basic and acidic residues) spans 55–65 (KEETKTIEKSE).

It belongs to the TatA/E family. Forms a complex with TatC.

It localises to the cell membrane. Its function is as follows. Part of the twin-arginine translocation (Tat) system that transports large folded proteins containing a characteristic twin-arginine motif in their signal peptide across membranes. TatA could form the protein-conducting channel of the Tat system. The polypeptide is Sec-independent protein translocase protein TatA (Dehalococcoides mccartyi (strain ATCC BAA-2266 / KCTC 15142 / 195) (Dehalococcoides ethenogenes (strain 195))).